A 281-amino-acid chain; its full sequence is Pre T-cell antigen receptor alpha (281 aa).

An N-terminal signal peptide occupies residues 1–23; sequence MAGTWLLLLLALGCPALPTGVGG. Residues 24–146 lie on the Extracellular side of the membrane; sequence TPFPSLAPPI…QEPLRGTPGG (123 aa). Residues Cys-47 and Cys-107 are joined by a disulfide bond. An N-linked (GlcNAc...) asparagine glycan is attached at Asn-67. A helical transmembrane segment spans residues 147–167; sequence ALWLGVLRLLLFKLLLFDLLL. Over 168–281 the chain is Cytoplasmic; it reads TCSCLCDPAG…LPPPLQAGAA (114 aa). The tract at residues 196–233 is disordered; that stretch reads LHPATETGGREATSSPRPQPRDRRWGDTPPGRKPGSPV.

Heterodimer with TCRB; disulfide linked. This heterodimer assembles with CD3 proteins into a signaling-competent pre-T-cell receptor complex. Interacts with RHBDD1. Expressed in immature but not mature T-cells. Also found in CD34+ cells from peripheral blood, CD34+ precursors from umbilical cord blood and adult bone marrow.

It localises to the membrane. It is found in the cell membrane. Its function is as follows. Component of the pre-T-cell receptor complex (composed of PTCRA, TCRB and the CD3 complex) that has a crucial role in early T-cell development, particularly alpha-beta T cell differentiation. The chain is Pre T-cell antigen receptor alpha from Homo sapiens (Human).